Here is a 448-residue protein sequence, read N- to C-terminus: uncharacterized protein (448 aa).

Position 280 is an N6-(pyridoxal phosphate)lysine (lysine 280).

This sequence belongs to the class-III pyridoxal-phosphate-dependent aminotransferase family.

Its subcellular location is the cytoplasm. It localises to the mitochondrion. This is an uncharacterized protein from Schizosaccharomyces pombe (strain 972 / ATCC 24843) (Fission yeast).